We begin with the raw amino-acid sequence, 402 residues long: TBC1 domain family member 20 (402 aa).

The tract at residues 1 to 27 (MALRPSKGDGSAGRWDRGAGKADFNAK) is disordered. Residues 14–26 (RWDRGAGKADFNA) show a composition bias toward basic and acidic residues. The Rab-GAP TBC domain maps to 59–245 (LLTDEIRCQV…RLYDFFLACH (187 aa)). Transmembrane regions (helical) follow at residues 237 to 257 (LYDFFLACHPLMPIYFAAVIV) and 366 to 386 (FVKLAVMGLTVALGAAALAVV).

The protein localises to the membrane. GTPase-activating protein specific for Rab1 and Rab2 small GTPase families for which it can accelerate the intrinsic GTP hydrolysis rate by more than five orders of magnitude. Also shows GAP activity for RAB18 GTPase. Promotes RAB18 dissociation from the endoplasmic reticulum (ER) membrane into the cytosol, probably through stimulating RAB18 GTP-hydrolysis. Involved in maintaining endoplasmic reticulum structure. The chain is TBC1 domain family member 20 from Mus musculus (Mouse).